Consider the following 67-residue polypeptide: Large ribosomal subunit protein bL35 (67 aa).

It belongs to the bacterial ribosomal protein bL35 family.

The sequence is that of Large ribosomal subunit protein bL35 from Deinococcus geothermalis (strain DSM 11300 / CIP 105573 / AG-3a).